A 189-amino-acid chain; its full sequence is uncharacterized protein (189 aa).

Positions 1 to 19 are cleaved as a signal peptide; sequence MKRVLFFLLMIFVSFGVIA.

This is an uncharacterized protein from Escherichia coli (strain K12).